The primary structure comprises 401 residues: MEKKKVVLAYSGGLDTSVAIKWLQEKNYDIIALCLDLGEGKDLAFVKEKALSVGAIKSYMIDVQEEFANEYALMAMQAHTLYEGKYPLVSALSRPLIAKKLVEIAEQEGATAVAHGCTGKGNDQVRFEVSIQALNPYLEVIAPVREWKWSREEEIAYAKENDVPIPINLDSPFSIDQNLWGRSNECGILEDPWAAPPEDAYEMTLALEDTPNKPEFVEIGFEAGVPTTLNGTAYPLSELIKTLNALAGKHGVGRIDHVENRLVGIKSREVYECPAAMTLITAHKELEDLTLVKEVAHFKPMIEQKITELIYNGLWFSPLKQALHAFLQETQKNVTGMVRVKLFKGHAIVEGRKSEYSLYDEKLATYTAQDEFNHDAAVGFISLFGLPTKVYSQVNQKKVEA.

9–17 is a binding site for ATP; sequence AYSGGLDTS. L-citrulline is bound at residue tyrosine 86. Glycine 116 lines the ATP pocket. Residues threonine 118, asparagine 122, and aspartate 123 each contribute to the L-aspartate site. Asparagine 122 lines the L-citrulline pocket. L-citrulline-binding residues include arginine 126, serine 174, serine 183, glutamate 259, and tyrosine 271.

The protein belongs to the argininosuccinate synthase family. Type 1 subfamily. In terms of assembly, homotetramer.

It localises to the cytoplasm. It carries out the reaction L-citrulline + L-aspartate + ATP = 2-(N(omega)-L-arginino)succinate + AMP + diphosphate + H(+). It functions in the pathway amino-acid biosynthesis; L-arginine biosynthesis; L-arginine from L-ornithine and carbamoyl phosphate: step 2/3. This chain is Argininosuccinate synthase, found in Bacillus cereus (strain Q1).